The chain runs to 552 residues: Hydroxylamine reductase (552 aa).

[2Fe-2S] cluster-binding residues include cysteine 5, cysteine 8, cysteine 20, and cysteine 27. Positions 251, 275, 319, 407, 435, 460, 494, and 496 each coordinate hybrid [4Fe-2O-2S] cluster. Cysteine 407 is subject to Cysteine persulfide.

Belongs to the HCP family. [2Fe-2S] cluster is required as a cofactor. The cofactor is hybrid [4Fe-2O-2S] cluster.

It is found in the cytoplasm. The catalysed reaction is A + NH4(+) + H2O = hydroxylamine + AH2 + H(+). Functionally, catalyzes the reduction of hydroxylamine to form NH(3) and H(2)O. The sequence is that of Hydroxylamine reductase from Shigella sonnei (strain Ss046).